A 502-amino-acid chain; its full sequence is Glycerol kinase (502 aa).

An ADP-binding site is contributed by Thr-14. Residues Thr-14 and Thr-15 each coordinate ATP. Residue Thr-14 participates in sn-glycerol 3-phosphate binding. Arg-18 lines the ADP pocket. The sn-glycerol 3-phosphate site is built by Arg-84, Glu-85, Tyr-136, and Asp-245. The glycerol site is built by Arg-84, Glu-85, Tyr-136, Asp-245, and Gln-246. The ADP site is built by Thr-267 and Gly-314. 4 residues coordinate ATP: Thr-267, Gly-314, Gln-318, and Gly-415. Gly-415 and Asn-419 together coordinate ADP.

This sequence belongs to the FGGY kinase family.

It catalyses the reaction glycerol + ATP = sn-glycerol 3-phosphate + ADP + H(+). It functions in the pathway polyol metabolism; glycerol degradation via glycerol kinase pathway; sn-glycerol 3-phosphate from glycerol: step 1/1. Inhibited by fructose 1,6-bisphosphate (FBP). Key enzyme in the regulation of glycerol uptake and metabolism. Catalyzes the phosphorylation of glycerol to yield sn-glycerol 3-phosphate. This Acaryochloris marina (strain MBIC 11017) protein is Glycerol kinase.